Here is a 225-residue protein sequence, read N- to C-terminus: Thymidylate kinase (225 aa).

Residue 10–17 (GIDGAGKS) coordinates ATP.

It belongs to the thymidylate kinase family.

The enzyme catalyses dTMP + ATP = dTDP + ADP. Functionally, phosphorylation of dTMP to form dTDP in both de novo and salvage pathways of dTTP synthesis. This chain is Thymidylate kinase, found in Polaromonas sp. (strain JS666 / ATCC BAA-500).